Consider the following 173-residue polypeptide: MSIILGIDPGSRITGYGVIRIVAGKAEYLGSGCIRTDLGELPSRLKQVYDGVSEIITQFKPDEFAIERVFMARNADSALKLGQARGSAIVAAVNALLPVSEYSATQIKQAVVGTGGAAKEQVQHMVTHLLKLSATPQADAADALGVALCHFHTRQILIKMAGRSTGSVRGRYR.

Catalysis depends on residues Asp8, Glu67, and Asp139. Residues Asp8, Glu67, and Asp139 each coordinate Mg(2+).

This sequence belongs to the RuvC family. In terms of assembly, homodimer which binds Holliday junction (HJ) DNA. The HJ becomes 2-fold symmetrical on binding to RuvC with unstacked arms; it has a different conformation from HJ DNA in complex with RuvA. In the full resolvosome a probable DNA-RuvA(4)-RuvB(12)-RuvC(2) complex forms which resolves the HJ. Mg(2+) is required as a cofactor.

The protein localises to the cytoplasm. The catalysed reaction is Endonucleolytic cleavage at a junction such as a reciprocal single-stranded crossover between two homologous DNA duplexes (Holliday junction).. Functionally, the RuvA-RuvB-RuvC complex processes Holliday junction (HJ) DNA during genetic recombination and DNA repair. Endonuclease that resolves HJ intermediates. Cleaves cruciform DNA by making single-stranded nicks across the HJ at symmetrical positions within the homologous arms, yielding a 5'-phosphate and a 3'-hydroxyl group; requires a central core of homology in the junction. The consensus cleavage sequence is 5'-(A/T)TT(C/G)-3'. Cleavage occurs on the 3'-side of the TT dinucleotide at the point of strand exchange. HJ branch migration catalyzed by RuvA-RuvB allows RuvC to scan DNA until it finds its consensus sequence, where it cleaves and resolves the cruciform DNA. The sequence is that of Crossover junction endodeoxyribonuclease RuvC from Aeromonas hydrophila subsp. hydrophila (strain ATCC 7966 / DSM 30187 / BCRC 13018 / CCUG 14551 / JCM 1027 / KCTC 2358 / NCIMB 9240 / NCTC 8049).